Here is a 449-residue protein sequence, read N- to C-terminus: Methylenetetrahydrofolate--tRNA-(uracil-5-)-methyltransferase TrmFO (449 aa).

9–14 (GGGMAG) contacts FAD.

This sequence belongs to the MnmG family. TrmFO subfamily. It depends on FAD as a cofactor.

It is found in the cytoplasm. The enzyme catalyses uridine(54) in tRNA + (6R)-5,10-methylene-5,6,7,8-tetrahydrofolate + NADH + H(+) = 5-methyluridine(54) in tRNA + (6S)-5,6,7,8-tetrahydrofolate + NAD(+). It catalyses the reaction uridine(54) in tRNA + (6R)-5,10-methylene-5,6,7,8-tetrahydrofolate + NADPH + H(+) = 5-methyluridine(54) in tRNA + (6S)-5,6,7,8-tetrahydrofolate + NADP(+). Functionally, catalyzes the folate-dependent formation of 5-methyl-uridine at position 54 (M-5-U54) in all tRNAs. The chain is Methylenetetrahydrofolate--tRNA-(uracil-5-)-methyltransferase TrmFO from Ruegeria pomeroyi (strain ATCC 700808 / DSM 15171 / DSS-3) (Silicibacter pomeroyi).